Reading from the N-terminus, the 431-residue chain is MHRALLNASRRVATVRSMASTVEGDAFRLSEYSSKYLGHRKAAFTEKLEIVNADDTPALPIYRVTNAVGDVIDKSQDPNFDEQTSLKMYKTMTQLNIMDRILYDSQRQGRISFYMTSFGEEGNHVGSAAALEPQDLIYGQYREAGVLLWRGYTMENFMNQCYGNADDLGKGRQMPMHFGTKERNFVTISSPLTTQLPQAVGSAYAFKQQKDNNRIAVVYFGDGAASEGDAHAAFNFAATLKCPIIFFCRNNGYAISTPTSEQYGGDGIAGKGPAYGLHTIRVDGNDLLAVYNATKEARRVALTNRPVLIEAMTYRLGHHSTSDDSTAYRSSDEVQTWGDKDHPITRFKKYITERGWWNEEKEMEWQKEVKKRVLTEFAAAEKRKKAHYHDLFEDVYDELPLRLRRQRDELDAHVAEYKEHYPMLETLQSKP.

140–142 (QYR) is a binding site for thiamine diphosphate. The K(+) site is built by S189, T194, and Q195.

Belongs to the BCKDHA family. It depends on thiamine diphosphate as a cofactor.

It is found in the mitochondrion matrix. The catalysed reaction is N(6)-[(R)-lipoyl]-L-lysyl-[protein] + 3-methyl-2-oxobutanoate + H(+) = N(6)-[(R)-S(8)-2-methylpropanoyldihydrolipoyl]-L-lysyl-[protein] + CO2. Its pathway is lipid metabolism; fatty acid biosynthesis. Functionally, the branched-chain alpha-keto dehydrogenase complex catalyzes the overall conversion of alpha-keto acids to acyl-CoA and CO(2). It contains multiple copies of three enzymatic components: branched-chain alpha-keto acid decarboxylase (E1), lipoamide acyltransferase (E2) and lipoamide dehydrogenase (E3). Required for the production of the monomethyl branched-chain fatty acids (mmBCFAs) isopentadecanoate (C15iso) and isoheptadecanoate (C17iso). This chain is 2-oxoisovalerate dehydrogenase subunit alpha, mitochondrial, found in Caenorhabditis elegans.